The chain runs to 257 residues: MGTLGRAIHTVGNRIRGTAQAQARVGSLLQGSHHIEKHLSRHRTLITVAPNASVIGDVQINKGSFISYASVSRDLQYPRAMGMGQVRRFSEDVSHMPEMEDSDVLNAFKDLMAADWAELPSAVVKDAKTAISKNTDDKAGQEALKNVFRAAEAVEEFGGILTSIKMEIDDSIGMSGEGVKPLPNDITDALRTAYQRYAEYLDSFEPEEVYLKKKVEMELGTKMIHLKMRCSGLGSEWGKVTVLGTSGLSGSYVEQRA.

The N-terminal 89 residues, 1 to 89 (MGTLGRAIHT…AMGMGQVRRF (89 aa)), are a transit peptide targeting the mitochondrion.

In terms of assembly, component of complex II composed of eight subunits in plants: four classical SDH subunits SDH1, SDH2, SDH3 and SDH4 (a flavoprotein (FP), an iron-sulfur protein (IP), and a cytochrome b composed of a large and a small subunit.), as well as four subunits unknown in mitochondria from bacteria and heterotrophic eukaryotes.

It localises to the mitochondrion inner membrane. Its pathway is carbohydrate metabolism; tricarboxylic acid cycle. This is Succinate dehydrogenase subunit 5, mitochondrial from Arabidopsis thaliana (Mouse-ear cress).